The chain runs to 339 residues: Paired box protein Pax-9 (339 aa).

The paired DNA-binding region spans 2–128 (AFGEVNQLGG…SSISRILRNK (127 aa)). Residues 5 to 61 (EVNQLGGVFVNGRPLPNAIRLRIVELAQLGIRPCDISRQLRVSHGCVSKILARYNET) form a PAI subdomain region. Residues 80–128 (TVVKHIRTYKQRDPGIFAWEIRDRLLADGVCDKYNVPSVSSISRILRNK) form an RED subdomain region.

The protein localises to the nucleus. In Gallus gallus (Chicken), this protein is Paired box protein Pax-9 (PAX9).